The primary structure comprises 316 residues: Dof zinc finger protein DOF5.7 (316 aa).

Residues 1-42 are disordered; sequence MSSHTNLPSPKPVPKPDHRISGTSQTKKPPSSSVAQDQQNLK. Residues 21-42 show a composition bias toward polar residues; it reads SGTSQTKKPPSSSVAQDQQNLK. Residues 41–95 form a Dof-type zinc finger; the sequence is LKCPRCNSPNTKFCYYNNYSLSQPRHFCKSCRRYWTRGGALRNVPIGGGCRKTKK. The Zn(2+) site is built by C43, C46, C68, and C71. Disordered stretches follow at residues 92 to 111 and 257 to 294; these read KTKKSIKPNSSMNTLPSSSS and NSSSPSSPTKKGDNQTEWYFGNNSDNEGVISNNANTGG. Residues 101–111 are compositionally biased toward low complexity; the sequence is SSMNTLPSSSS. The span at 257 to 291 shows a compositional bias: polar residues; the sequence is NSSSPSSPTKKGDNQTEWYFGNNSDNEGVISNNAN.

The protein resides in the nucleus. Functionally, transcription factor that binds specifically to a 5'-AA[AG]G-3' consensus core sequence. The protein is Dof zinc finger protein DOF5.7 (DOF5.7) of Arabidopsis thaliana (Mouse-ear cress).